The sequence spans 2498 residues: PKS-NRPS hybrid synthetase acdB (2498 aa).

The adenylation (A) domain stretch occupies residues 34–427 (FEQAAHAHFD…GRADSQVKIR (394 aa)). One can recognise a Carrier 1 domain in the interval 531–606 (QPATELERDI…SLAGYLMDMD (76 aa)). Residue S566 is modified to O-(pantetheine 4'-phosphoryl)serine. Positions 627–1058 (SDDIAVVSMA…GTNAHVIVEE (432 aa)) constitute a Ketosynthase family 3 (KS3) domain. Catalysis depends on for beta-ketoacyl synthase activity residues C802, H938, and H979. The segment at 1165–1485 (LFAGQGSQQL…EILARLHVQH (321 aa)) is malonyl-CoA:ACP transacylase (MAT) domain. The segment at 1739–1917 (GAVLITGGLS…PAVCVAYGPL (179 aa)) is ketoreductase (KR) domain. Residues 2017-2092 (EILLRTIQEA…ELSRYLLPQL (76 aa)) form the Carrier 2 domain. S2052 is subject to O-(pantetheine 4'-phosphoryl)serine. The tract at residues 2149–2378 (VTGATEFVGA…FPVDYVCRTI (230 aa)) is thioester reductase (TE) domain.

It in the C-terminal section; belongs to the NRP synthetase family. It depends on pantetheine 4'-phosphate as a cofactor.

It functions in the pathway secondary metabolite biosynthesis. Functionally, PKS-NRPS hybrid synthetase; part of the gene cluster that mediates the biosynthesis of aspcandine, a pyrrolobenzazepine alkaloid. Initially, the indoleamine 2,3-dioxygenase acdA accepts L-tryptophan and performs the oxidative opening of the indole ring to yield N'-formyl-L-kynurenine, which undergoes the spontaneous deformylation reaction to provide L-kynurenine. The kynurenine 3-monooxygenase acdD then hydroxylates L-kynurenine to afford 3-hydroxy-L-kynurenine. 3-hydroxy-L-kynurenine is activated by the A domain of the NRPS-PKS acdB and subsequently loaded onto the enzyme. The KS domain conducts the decarboxylative condensation of the 3-hydroxy-L-kynurenyl and malonyl moieties, and subsequent nucleophilic attacks by the two amino groups would occur nonenzymatically at two distinct positions, achieving the chain release and the construction of the tricyclic system. Finally, a dehydration reaction completes the biosynthesis to yield aspcandine. This chain is PKS-NRPS hybrid synthetase acdB, found in Aspergillus candidus.